A 261-amino-acid polypeptide reads, in one-letter code: MAHQAHAYHMVDPSPWPLTGAVAALLLTSGLAIWFPFNSLILLTLGLVLLLLTMYQWWRDIVREGTFQGHHTPPVQKGLRYGMILFITSEVFFFLGFFWAFYHSSLAPTPELGGCWPPTGIVPLNPFEVPLLNTAVLLASGVTVTWAHHSIMEGERKQAIHSLTLTILLGFYFTFLQAMEYYEAPFTIADGVYGSTFFVATGFHGLHVIIGSTFLAICLLRQIRYHFTSEHHFGFEAAAWYWHFVDVVWLFLYISIYWWGS.

Over 1 to 15 (MAHQAHAYHMVDPSP) the chain is Mitochondrial matrix. A helical membrane pass occupies residues 16 to 34 (WPLTGAVAALLLTSGLAIW). The Mitochondrial intermembrane segment spans residues 35-40 (FPFNSL). The helical transmembrane segment at 41–66 (ILLTLGLVLLLLTMYQWWRDIVREGT) threads the bilayer. The Mitochondrial matrix segment spans residues 67–72 (FQGHHT). A helical membrane pass occupies residues 73–105 (PPVQKGLRYGMILFITSEVFFFLGFFWAFYHSS). Residues 106-128 (LAPTPELGGCWPPTGIVPLNPFE) are Mitochondrial intermembrane-facing. The chain crosses the membrane as a helical span at residues 129–152 (VPLLNTAVLLASGVTVTWAHHSIM). Residues 153–155 (EGE) lie on the Mitochondrial matrix side of the membrane. A helical transmembrane segment spans residues 156-183 (RKQAIHSLTLTILLGFYFTFLQAMEYYE). Over 184-190 (APFTIAD) the chain is Mitochondrial intermembrane. The helical transmembrane segment at 191–223 (GVYGSTFFVATGFHGLHVIIGSTFLAICLLRQI) threads the bilayer. The Mitochondrial matrix segment spans residues 224–232 (RYHFTSEHH). The chain crosses the membrane as a helical span at residues 233 to 256 (FGFEAAAWYWHFVDVVWLFLYISI). The Mitochondrial intermembrane portion of the chain corresponds to 257–261 (YWWGS).

Belongs to the cytochrome c oxidase subunit 3 family. In terms of assembly, component of the cytochrome c oxidase (complex IV, CIV), a multisubunit enzyme composed of 14 subunits. The complex is composed of a catalytic core of 3 subunits MT-CO1, MT-CO2 and MT-CO3, encoded in the mitochondrial DNA, and 11 supernumerary subunits COX4I, COX5A, COX5B, COX6A, COX6B, COX6C, COX7A, COX7B, COX7C, COX8 and NDUFA4, which are encoded in the nuclear genome. The complex exists as a monomer or a dimer and forms supercomplexes (SCs) in the inner mitochondrial membrane with NADH-ubiquinone oxidoreductase (complex I, CI) and ubiquinol-cytochrome c oxidoreductase (cytochrome b-c1 complex, complex III, CIII), resulting in different assemblies (supercomplex SCI(1)III(2)IV(1) and megacomplex MCI(2)III(2)IV(2)).

It is found in the mitochondrion inner membrane. It catalyses the reaction 4 Fe(II)-[cytochrome c] + O2 + 8 H(+)(in) = 4 Fe(III)-[cytochrome c] + 2 H2O + 4 H(+)(out). Its function is as follows. Component of the cytochrome c oxidase, the last enzyme in the mitochondrial electron transport chain which drives oxidative phosphorylation. The respiratory chain contains 3 multisubunit complexes succinate dehydrogenase (complex II, CII), ubiquinol-cytochrome c oxidoreductase (cytochrome b-c1 complex, complex III, CIII) and cytochrome c oxidase (complex IV, CIV), that cooperate to transfer electrons derived from NADH and succinate to molecular oxygen, creating an electrochemical gradient over the inner membrane that drives transmembrane transport and the ATP synthase. Cytochrome c oxidase is the component of the respiratory chain that catalyzes the reduction of oxygen to water. Electrons originating from reduced cytochrome c in the intermembrane space (IMS) are transferred via the dinuclear copper A center (CU(A)) of subunit 2 and heme A of subunit 1 to the active site in subunit 1, a binuclear center (BNC) formed by heme A3 and copper B (CU(B)). The BNC reduces molecular oxygen to 2 water molecules using 4 electrons from cytochrome c in the IMS and 4 protons from the mitochondrial matrix. This is Cytochrome c oxidase subunit 3 (mt-co3) from Tetraodon nigroviridis (Spotted green pufferfish).